Here is a 1214-residue protein sequence, read N- to C-terminus: Peregrin (1214 aa).

Residues Tyr-21–His-47 form a C2H2-type zinc finger. Disordered regions lie at residues Tyr-43–Arg-87 and Val-118–Pro-177. A compositionally biased stretch (basic residues) spans Leu-58–Gln-67. Positions Arg-59–Tyr-222 are interaction with KAT6A and KAT6B. Low complexity predominate over residues Gln-74–Pro-85. The span at Val-119–Pro-130 shows a compositional bias: acidic residues. Ser-120 carries the post-translational modification Phosphoserine. Position 147 is an N6-acetyllysine (Lys-147). Residues Ser-148 to Asn-167 show a composition bias toward basic residues. Phosphoserine is present on Ser-238. The PHD-type 1 zinc-finger motif lies at Asp-273–Ser-323. The C2HC pre-PHD-type zinc-finger motif lies at Ala-327–Val-360. The segment at Leu-384–Thr-448 adopts a PHD-type 2 zinc-finger fold. The interval Thr-448–Lys-489 is disordered. Ser-460 and Ser-462 each carry phosphoserine. Positions Gly-464–Glu-474 are enriched in acidic residues. The interaction with MEAF6 and ING5 stretch occupies residues Leu-501–Arg-821. The segment at Tyr-543–Glu-1079 is required for RUNX1 and RUNX2 transcriptional activation. The residue at position 580 (Lys-580) is an N6-acetyllysine. One can recognise a Bromo domain in the interval Met-628–Ala-732. Residues Leu-819–Ser-1062 form a disordered region. The span at His-825–Gly-838 shows a compositional bias: basic and acidic residues. The residue at position 858 (Thr-858) is a Phosphothreonine. Residues Thr-858–Ser-871 show a composition bias toward low complexity. 4 positions are modified to phosphoserine: Ser-860, Ser-917, Ser-922, and Ser-926. Over residues Ser-993–Ser-1021 the composition is skewed to low complexity. Ser-1076 bears the Phosphoserine mark. The PWWP domain maps to Ala-1085–Asn-1168. At Ser-1187 the chain carries Phosphoserine.

In terms of assembly, component of some HBO1 complex composed of KAT7/HBO1, MEAF6, ING5, and BRPF1. Component of the MOZ/MORF complex composed at least of ING5, KAT6A, KAT6B, MEAF6 and one of BRPF1, BRD1/BRPF2 and BRPF3. Interacts (via PHD-type zinc finger domains) with unmethylated histone H3 at 'Lys-4' (H3K4me0). Interacts with trimethylated 'Lys-36' of histone H3 (H3K36me3). Interacts with ING5; interaction directs BRPF1 to H4K4me3-enriched chromatin at the 5' of active genes. Interacts with KAT7. Acetylated by KAT6A. In terms of tissue distribution, high levels in testis.

The protein resides in the nucleus. It localises to the chromosome. The protein localises to the cytoplasm. Its function is as follows. Scaffold subunit of various histone acetyltransferase (HAT) complexes, such as the MOZ/MORF and HBO1 complexes, which have a histone H3 acetyltransferase activity. Plays a key role in HBO1 complex by directing KAT7/HBO1 specificity towards histone H3 'Lys-14' acetylation (H3K14ac). Some HAT complexes preferentially mediate histone H3 'Lys-23' (H3K23ac) acetylation. Positively regulates the transcription of RUNX1 and RUNX2. This is Peregrin from Homo sapiens (Human).